Reading from the N-terminus, the 699-residue chain is Chitin synthase 7 (699 aa).

Transmembrane regions (helical) follow at residues 19–39 (IVGV…AAFL), 58–80 (SVVV…VVTL), 98–118 (LQWF…LFCI), 445–465 (FMQN…LAII), 474–494 (LPVG…IYFG), and 507–527 (VMFV…IFTA). The interval 628–648 (AAGGSGEASEPGTRWAPDPRE) is disordered.

The protein belongs to the chitin synthase family. Class VI subfamily.

It localises to the cell membrane. It carries out the reaction [(1-&gt;4)-N-acetyl-beta-D-glucosaminyl](n) + UDP-N-acetyl-alpha-D-glucosamine = [(1-&gt;4)-N-acetyl-beta-D-glucosaminyl](n+1) + UDP + H(+). Functionally, polymerizes chitin, a structural polymer of the cell wall and septum, by transferring the sugar moiety of UDP-GlcNAc to the non-reducing end of the growing chitin polymer. Plays a role in cell wall integrity. Required to successfully penetrate the host plants and thus plays a key role in pathogenicity. In Verticillium dahliae (strain VdLs.17 / ATCC MYA-4575 / FGSC 10137) (Verticillium wilt), this protein is Chitin synthase 7.